The sequence spans 401 residues: Probable cysteine desulfurase (401 aa).

Lys-223 carries the post-translational modification N6-(pyridoxal phosphate)lysine.

It belongs to the class-V pyridoxal-phosphate-dependent aminotransferase family. Csd subfamily. Pyridoxal 5'-phosphate serves as cofactor.

It carries out the reaction (sulfur carrier)-H + L-cysteine = (sulfur carrier)-SH + L-alanine. Functionally, catalyzes the removal of elemental sulfur and selenium atoms from L-cysteine, L-cystine, L-selenocysteine, and L-selenocystine to produce L-alanine. This is Probable cysteine desulfurase (csdA) from Pseudomonas putida (strain ATCC 47054 / DSM 6125 / CFBP 8728 / NCIMB 11950 / KT2440).